The chain runs to 82 residues: Small ribosomal subunit protein bS16 (82 aa).

It belongs to the bacterial ribosomal protein bS16 family.

The protein is Small ribosomal subunit protein bS16 of Edwardsiella ictaluri (strain 93-146).